The chain runs to 1623 residues: ATP-binding cassette sub-family A member 9 (1623 aa).

The chain crosses the membrane as a helical span at residues 31–51 (LLEWLFSLLLILFVYQLSSNL). Asparagine 120 carries N-linked (GlcNAc...) asparagine glycosylation. The next 6 membrane-spanning stretches (helical) occupy residues 225 to 245 (FFIFFCVISFSSLIYYLSVNI), 265 to 285 (AFWLSWSLMYAGFILVVAVLM), 295 to 315 (VVLTGFMVVFLLFLFYGLSLI), 329 to 349 (FLTGLAIFILTVFWGSLGFTA), 354 to 374 (LPAFVEWTLCFLSPFAFTTGM), and 398 to 418 (LIMATLFMLVLDALLYLVLAL). Residues 481-716 (IRIKNLKKEY…WGIGYHLSLH (236 aa)) enclose the ABC transporter 1 domain. 517–524 (GHSGAGKT) provides a ligand contact to ATP. A run of 7 helical transmembrane segments spans residues 863 to 883 (LMTVLLLFGISFVPQLLEHLV), 1025 to 1045 (AFFWIPVAASLTPYIAMGSIS), 1071 to 1091 (LVDIPIYFLILFLMQIMDSVF), 1107 to 1127 (IPCSIGYASSLIFMTYVISFI), 1135 to 1155 (SGIWSFFFLIVTIFFIIATDI), 1163 to 1183 (LLICTFLVPPFTLIGSLLIFS), and 1199 to 1219 (QLVFLALLIPYLHFLLFFFIL). The ABC transporter 2 domain occupies 1287–1520 (LRKEYIGRTK…FGKDYLLEMK (234 aa)). 1325–1332 (GHNGAGKS) is a binding site for ATP.

Belongs to the ABC transporter superfamily. ABCA family. As to expression, highly expressed in heart and to lower extent in kidney, brain and spleen. Weakly expressed in developing and adult brains. Weakly expressed in the cerebellar granular layer at P14 and P21.

The protein localises to the membrane. In terms of biological role, transporter that may play a role in monocyte differentiation and lipid transport and homeostasis. This Mus musculus (Mouse) protein is ATP-binding cassette sub-family A member 9 (Abca9).